We begin with the raw amino-acid sequence, 278 residues long: Thiazole synthase (278 aa).

Lys-107 functions as the Schiff-base intermediate with DXP in the catalytic mechanism. 1-deoxy-D-xylulose 5-phosphate is bound by residues Gly-168, Ala-194–Gly-195, and Ala-216–Ser-217.

The protein belongs to the ThiG family. As to quaternary structure, homotetramer. Forms heterodimers with either ThiH or ThiS.

It is found in the cytoplasm. It carries out the reaction [ThiS sulfur-carrier protein]-C-terminal-Gly-aminoethanethioate + 2-iminoacetate + 1-deoxy-D-xylulose 5-phosphate = [ThiS sulfur-carrier protein]-C-terminal Gly-Gly + 2-[(2R,5Z)-2-carboxy-4-methylthiazol-5(2H)-ylidene]ethyl phosphate + 2 H2O + H(+). It functions in the pathway cofactor biosynthesis; thiamine diphosphate biosynthesis. Catalyzes the rearrangement of 1-deoxy-D-xylulose 5-phosphate (DXP) to produce the thiazole phosphate moiety of thiamine. Sulfur is provided by the thiocarboxylate moiety of the carrier protein ThiS. In vitro, sulfur can be provided by H(2)S. The polypeptide is Thiazole synthase (Corynebacterium jeikeium (strain K411)).